A 151-amino-acid polypeptide reads, in one-letter code: Transcriptional regulator MraZ (151 aa).

2 SpoVT-AbrB domains span residues 5–52 and 81–124; these read ANAI…PLDE and AVDL…DEDA.

The protein belongs to the MraZ family. As to quaternary structure, forms oligomers.

It localises to the cytoplasm. It is found in the nucleoid. In Pseudomonas fluorescens (strain SBW25), this protein is Transcriptional regulator MraZ.